A 122-amino-acid polypeptide reads, in one-letter code: Large ribosomal subunit protein bL12 (122 aa).

Belongs to the bacterial ribosomal protein bL12 family. As to quaternary structure, homodimer. Part of the ribosomal stalk of the 50S ribosomal subunit. Forms a multimeric L10(L12)X complex, where L10 forms an elongated spine to which 2 to 4 L12 dimers bind in a sequential fashion. Binds GTP-bound translation factors.

Forms part of the ribosomal stalk which helps the ribosome interact with GTP-bound translation factors. Is thus essential for accurate translation. This Streptococcus sanguinis (strain SK36) protein is Large ribosomal subunit protein bL12.